The sequence spans 711 residues: Ribosomal RNA large subunit methyltransferase K/L (711 aa).

Residues threonine 43 to leucine 154 form the THUMP domain.

Belongs to the methyltransferase superfamily. RlmKL family.

The protein resides in the cytoplasm. The enzyme catalyses guanosine(2445) in 23S rRNA + S-adenosyl-L-methionine = N(2)-methylguanosine(2445) in 23S rRNA + S-adenosyl-L-homocysteine + H(+). It catalyses the reaction guanosine(2069) in 23S rRNA + S-adenosyl-L-methionine = N(2)-methylguanosine(2069) in 23S rRNA + S-adenosyl-L-homocysteine + H(+). In terms of biological role, specifically methylates the guanine in position 2445 (m2G2445) and the guanine in position 2069 (m7G2069) of 23S rRNA. In Haemophilus influenzae (strain PittEE), this protein is Ribosomal RNA large subunit methyltransferase K/L.